The chain runs to 428 residues: Histidine--tRNA ligase (428 aa).

It belongs to the class-II aminoacyl-tRNA synthetase family. In terms of assembly, homodimer.

The protein resides in the cytoplasm. The catalysed reaction is tRNA(His) + L-histidine + ATP = L-histidyl-tRNA(His) + AMP + diphosphate + H(+). The sequence is that of Histidine--tRNA ligase from Pseudomonas entomophila (strain L48).